The primary structure comprises 169 residues: S-ribosylhomocysteine lyase (169 aa).

The Fe cation site is built by histidine 54, histidine 58, and cysteine 128.

Belongs to the LuxS family. In terms of assembly, homodimer. It depends on Fe cation as a cofactor.

It catalyses the reaction S-(5-deoxy-D-ribos-5-yl)-L-homocysteine = (S)-4,5-dihydroxypentane-2,3-dione + L-homocysteine. Functionally, involved in the synthesis of autoinducer 2 (AI-2) which is secreted by bacteria and is used to communicate both the cell density and the metabolic potential of the environment. The regulation of gene expression in response to changes in cell density is called quorum sensing. Catalyzes the transformation of S-ribosylhomocysteine (RHC) to homocysteine (HC) and 4,5-dihydroxy-2,3-pentadione (DPD). The protein is S-ribosylhomocysteine lyase of Shewanella oneidensis (strain ATCC 700550 / JCM 31522 / CIP 106686 / LMG 19005 / NCIMB 14063 / MR-1).